Reading from the N-terminus, the 454-residue chain is Cobyrinate a,c-diamide synthase (454 aa).

The GATase cobBQ-type domain occupies 244-440; the sequence is RLGIAKDKAF…LHVHFYQNPK (197 aa). The active-site Nucleophile is the Cys326.

Belongs to the CobB/CbiA family. Mg(2+) serves as cofactor.

It catalyses the reaction cob(II)yrinate + 2 L-glutamine + 2 ATP + 2 H2O = cob(II)yrinate a,c diamide + 2 L-glutamate + 2 ADP + 2 phosphate + 2 H(+). It functions in the pathway cofactor biosynthesis; adenosylcobalamin biosynthesis; cob(II)yrinate a,c-diamide from sirohydrochlorin (anaerobic route): step 10/10. Catalyzes the ATP-dependent amidation of the two carboxylate groups at positions a and c of cobyrinate, using either L-glutamine or ammonia as the nitrogen source. The polypeptide is Cobyrinate a,c-diamide synthase (Limosilactobacillus reuteri subsp. reuteri (strain JCM 1112) (Lactobacillus reuteri)).